Consider the following 396-residue polypeptide: E3 ubiquitin-protein ligase NHLRC1 (396 aa).

The segment at 23–69 (CKVCFERFGHRQQRRPRNLPCGHVVCLACVAALAHPRTLALECPFCR) adopts an RING-type zinc-finger fold. NHL repeat units lie at residues 110-154 (ALTC…FDSG), 158-201 (AHQF…FDFF), 202-242 (GQIK…LEAD), 245-298 (EGVL…FNSS), 299-347 (MQLI…LGKP), and 348-391 (EEFP…FKVM).

In terms of assembly, interacts with AGL. Interacts (via the NHL repeats) with EPM2A/laforin. Forms a complex with EPM2A/laforin and HSP70.

It is found in the endoplasmic reticulum. The protein localises to the nucleus. The enzyme catalyses S-ubiquitinyl-[E2 ubiquitin-conjugating enzyme]-L-cysteine + [acceptor protein]-L-lysine = [E2 ubiquitin-conjugating enzyme]-L-cysteine + N(6)-ubiquitinyl-[acceptor protein]-L-lysine.. It participates in protein modification; protein ubiquitination. Its function is as follows. E3 ubiquitin-protein ligase. Together with the phosphatase EPM2A/laforin, appears to be involved in the clearance of toxic polyglucosan and protein aggregates via multiple pathways. In complex with EPM2A/laforin and HSP70, suppresses the cellular toxicity of misfolded proteins by promoting their degradation through the ubiquitin-proteasome system (UPS). Ubiquitinates the glycogen-targeting protein phosphatase subunits PPP1R3C/PTG and PPP1R3D in a laforin-dependent manner and targets them for proteasome-dependent degradation, thus decreasing glycogen accumulation. Polyubiquitinates EPM2A/laforin and ubiquitinates AGL and targets them for proteasome-dependent degradation. Also promotes proteasome-independent protein degradation through the macroautophagy pathway. The protein is E3 ubiquitin-protein ligase NHLRC1 (Nhlrc1) of Rattus norvegicus (Rat).